The primary structure comprises 211 residues: Histidine biosynthesis bifunctional protein HisIE (211 aa).

The tract at residues 1-122 (MSFKTAEVSS…DPQEESQMVW (122 aa)) is phosphoribosyl-AMP cyclohydrolase. Positions 123-211 (LHQLEQLLAA…VINKLKERHK (89 aa)) are phosphoribosyl-ATP pyrophosphohydrolase.

This sequence in the N-terminal section; belongs to the PRA-CH family. It in the C-terminal section; belongs to the PRA-PH family.

It is found in the cytoplasm. It catalyses the reaction 1-(5-phospho-beta-D-ribosyl)-ATP + H2O = 1-(5-phospho-beta-D-ribosyl)-5'-AMP + diphosphate + H(+). The enzyme catalyses 1-(5-phospho-beta-D-ribosyl)-5'-AMP + H2O = 1-(5-phospho-beta-D-ribosyl)-5-[(5-phospho-beta-D-ribosylamino)methylideneamino]imidazole-4-carboxamide. It participates in amino-acid biosynthesis; L-histidine biosynthesis; L-histidine from 5-phospho-alpha-D-ribose 1-diphosphate: step 2/9. The protein operates within amino-acid biosynthesis; L-histidine biosynthesis; L-histidine from 5-phospho-alpha-D-ribose 1-diphosphate: step 3/9. This Vibrio vulnificus (strain CMCP6) protein is Histidine biosynthesis bifunctional protein HisIE.